The primary structure comprises 37 residues: Large ribosomal subunit protein bL36c (37 aa).

This sequence belongs to the bacterial ribosomal protein bL36 family.

It localises to the plastid. The protein localises to the cyanelle. This chain is Large ribosomal subunit protein bL36c (rpl36), found in Cyanophora paradoxa.